The following is a 63-amino-acid chain: MKVNDRVTVKTDGGPRREGVVLEVEEFSEGVMYLVSLADYPAGVWFFNEVDSQDGTFVEPLSQ.

It belongs to the DsrB family.

In Yersinia pseudotuberculosis serotype O:1b (strain IP 31758), this protein is Protein DsrB.